The sequence spans 22 residues: Bacteriocin serracin-P 23 kDa subunit (22 aa).

Major component of a prophage tail tube. Its function is as follows. Antibacterial activity against Gram-negative bacterium E.amylovora. The sequence is that of Bacteriocin serracin-P 23 kDa subunit from Serratia plymuthica.